The primary structure comprises 295 residues: Ubiquitin-conjugating enzyme E2-34 kDa (295 aa).

Residues 7 to 169 (TASSLLLRQY…VKMEVERSKQ (163 aa)) form the UBC core domain. The active-site Glycyl thioester intermediate is C95. Positions 185–295 (ISQSKLDEPE…EDVERVSKKI (111 aa)) are disordered. S186 is subject to Phosphoserine. A compositionally biased stretch (basic and acidic residues) spans 189–200 (KLDEPESNKDMA). Composition is skewed to acidic residues over residues 207-226 (SDLD…DYDD) and 234-265 (EDDD…DSID). A compositionally biased stretch (basic and acidic residues) spans 269-279 (VMDRKQPHKAE). Residues S282 and S292 each carry the phosphoserine modification.

This sequence belongs to the ubiquitin-conjugating enzyme family. As to quaternary structure, interacts with CDC53. Component of the E3 ubiquitin ligase complexes SCF with CDC53, SKP1/CBF3D, HRT1 and some F-box proteins like MET30 and CDC4.

The protein localises to the cytoplasm. It is found in the nucleus. It carries out the reaction S-ubiquitinyl-[E1 ubiquitin-activating enzyme]-L-cysteine + [E2 ubiquitin-conjugating enzyme]-L-cysteine = [E1 ubiquitin-activating enzyme]-L-cysteine + S-ubiquitinyl-[E2 ubiquitin-conjugating enzyme]-L-cysteine.. Its pathway is protein modification; protein ubiquitination. Catalyzes the covalent attachment of ubiquitin to other proteins. Capable, in vitro, to ubiquitinate histone H2A. Functionally, mediates the initiation of DNA replication (transition of G1 to S phase in cell cycle). Essential component of the E3 ubiquitin ligase complex SCF (SKP1-CUL1-F-box protein), which mediates the ubiquitination and subsequent proteasomal degradation of target proteins. Involved in the regulation of methionine biosynthesis genes and in the degradation of CDC6 together with CDC4 and CDC53. This chain is Ubiquitin-conjugating enzyme E2-34 kDa (CDC34), found in Saccharomyces cerevisiae (strain ATCC 204508 / S288c) (Baker's yeast).